The following is a 500-amino-acid chain: Histidinol dehydrogenase homolog 1 (500 aa).

The interval 1-25 (MPPAGGIFHRPPTTRKSRRLTPRSA) is disordered. Basic residues predominate over residues 12–21 (PTTRKSRRLT). 2 residues coordinate Zn(2+): Q313 and H316. Residues E381 and H382 each act as proton acceptor in the active site. Zn(2+)-binding residues include D415 and H475.

Belongs to the histidinol dehydrogenase family. It depends on Zn(2+) as a cofactor.

The protein is Histidinol dehydrogenase homolog 1 of Mesorhizobium japonicum (strain LMG 29417 / CECT 9101 / MAFF 303099) (Mesorhizobium loti (strain MAFF 303099)).